Here is a 192-residue protein sequence, read N- to C-terminus: uncharacterized protein (192 aa).

Positions 29–160 (HRQAAVLIPI…PLDIYRRGDS (132 aa)) constitute a Nudix hydrolase domain. The short motif at 67–89 (GAVDDTDASAIAAALREAEEEVA) is the Nudix box element. Mg(2+)-binding residues include Glu83 and Glu87.

This sequence belongs to the Nudix hydrolase family. PCD1 subfamily. Requires Mn(2+) as cofactor. Mg(2+) serves as cofactor.

Its function is as follows. Probably mediates the hydrolysis of some nucleoside diphosphate derivatives. This is an uncharacterized protein from Escherichia coli (strain K12).